A 239-amino-acid chain; its full sequence is Fumarate reductase iron-sulfur subunit (239 aa).

The 2Fe-2S ferredoxin-type domain occupies 5 to 95; sequence LTIRVFKYDP…DGVITLLPLP (91 aa). [2Fe-2S] cluster contacts are provided by Cys57, Cys62, Cys65, and Cys77. The 4Fe-4S ferredoxin-type domain maps to 142 to 171; the sequence is AQEVFELDRCIECGCCIAACGTKIMREDFV. [4Fe-4S] cluster-binding residues include Cys151, Cys154, and Cys157. Residues Cys161, Cys208, and Cys214 each contribute to the [3Fe-4S] cluster site. Residue Cys218 participates in [4Fe-4S] cluster binding.

Belongs to the succinate dehydrogenase/fumarate reductase iron-sulfur protein family. Part of an enzyme complex containing three subunits: a flavoprotein (frdA), an iron-sulfur protein (frdB), and diheme cytochrome b (frdC). [2Fe-2S] cluster is required as a cofactor. [3Fe-4S] cluster serves as cofactor. It depends on [4Fe-4S] cluster as a cofactor.

It localises to the cell inner membrane. The enzyme catalyses a menaquinone + succinate = a menaquinol + fumarate. The fumarate reductase enzyme complex is required for fumarate respiration using formate or sulfide as electron donor. This chain is Fumarate reductase iron-sulfur subunit (frdB), found in Wolinella succinogenes (strain ATCC 29543 / DSM 1740 / CCUG 13145 / JCM 31913 / LMG 7466 / NCTC 11488 / FDC 602W) (Vibrio succinogenes).